We begin with the raw amino-acid sequence, 296 residues long: 4-diphosphocytidyl-2-C-methyl-D-erythritol kinase (296 aa).

The active site involves K11. Residue 95–105 (PVAAGMAGGSS) coordinates ATP. D137 is a catalytic residue.

It belongs to the GHMP kinase family. IspE subfamily.

It carries out the reaction 4-CDP-2-C-methyl-D-erythritol + ATP = 4-CDP-2-C-methyl-D-erythritol 2-phosphate + ADP + H(+). Its pathway is isoprenoid biosynthesis; isopentenyl diphosphate biosynthesis via DXP pathway; isopentenyl diphosphate from 1-deoxy-D-xylulose 5-phosphate: step 3/6. Functionally, catalyzes the phosphorylation of the position 2 hydroxy group of 4-diphosphocytidyl-2C-methyl-D-erythritol. This Clostridioides difficile (strain 630) (Peptoclostridium difficile) protein is 4-diphosphocytidyl-2-C-methyl-D-erythritol kinase.